The primary structure comprises 274 residues: Shikimate dehydrogenase (NADP(+)) (274 aa).

Shikimate contacts are provided by residues 14–16 and threonine 60; that span reads SKS. Lysine 64 (proton acceptor) is an active-site residue. Glutamate 76 is an NADP(+) binding site. Asparagine 85 and aspartate 101 together coordinate shikimate. NADP(+)-binding positions include 126-130, 150-155, and methionine 214; these read GAGGA and NRTAEK. Tyrosine 216 provides a ligand contact to shikimate. Position 238 (glycine 238) interacts with NADP(+).

It belongs to the shikimate dehydrogenase family. In terms of assembly, homodimer.

The enzyme catalyses shikimate + NADP(+) = 3-dehydroshikimate + NADPH + H(+). It participates in metabolic intermediate biosynthesis; chorismate biosynthesis; chorismate from D-erythrose 4-phosphate and phosphoenolpyruvate: step 4/7. Its function is as follows. Involved in the biosynthesis of the chorismate, which leads to the biosynthesis of aromatic amino acids. Catalyzes the reversible NADPH linked reduction of 3-dehydroshikimate (DHSA) to yield shikimate (SA). This Pseudomonas paraeruginosa (strain DSM 24068 / PA7) (Pseudomonas aeruginosa (strain PA7)) protein is Shikimate dehydrogenase (NADP(+)).